The sequence spans 303 residues: Leukocyte immunoglobulin-like receptor subfamily B member 4B (303 aa).

Residues 1–23 (MIAMLTVLLYLALILEPRTAVQA) form the signal peptide. The Extracellular segment spans residues 24–238 (GHLPKPIIWA…TEDGLETYQK (215 aa)). Ig-like C2-type domains follow at residues 42–123 (YTSV…AYEN) and 124–212 (PSLS…KPSN). A disulfide bridge links Cys49 with Cys98. N-linked (GlcNAc...) asparagine glycans are attached at residues Asn79, Asn133, and Asn191. Cys144 and Cys196 are joined by a disulfide. Residues 239–260 (ILIGVLVSFLLLFFLLLFLILI) form a helical membrane-spanning segment. Over 261-303 (GYQCRHKNKANASVKNTQSEDNAELNSWNPQNEDPPRELCTPR) the chain is Cytoplasmic. Over residues 275 to 292 (KNTQSEDNAELNSWNPQN) the composition is skewed to polar residues. The tract at residues 275-303 (KNTQSEDNAELNSWNPQNEDPPRELCTPR) is disordered.

In terms of assembly, monomer and homodimer. In terms of tissue distribution, expressed on mast cells (at protein level). Also expressed at much lower levels on natural killer cells (at protein level).

It is found in the cell membrane. Functionally, plays a role in mast cell activation. The chain is Leukocyte immunoglobulin-like receptor subfamily B member 4B from Mus musculus (Mouse).